Consider the following 339-residue polypeptide: Holliday junction branch migration complex subunit RuvB (339 aa).

Residues 1 to 180 form a large ATPase domain (RuvB-L) region; it reads MTRTITPDMT…FGVISRLEFY (180 aa). ATP is bound by residues Leu-19, Arg-20, Gly-61, Lys-64, Thr-65, Thr-66, 127–129, Arg-170, Tyr-180, and Arg-217; that span reads EDF. Thr-65 contributes to the Mg(2+) binding site. The segment at 181–251 is small ATPAse domain (RuvB-S); sequence TIEELAFIIT…VVQDALALLE (71 aa). A head domain (RuvB-H) region spans residues 254–339; the sequence is HMGFDYMDRM…EPPQGKLFQD (86 aa). DNA-binding residues include Arg-309 and Arg-314.

It belongs to the RuvB family. In terms of assembly, homohexamer. Forms an RuvA(8)-RuvB(12)-Holliday junction (HJ) complex. HJ DNA is sandwiched between 2 RuvA tetramers; dsDNA enters through RuvA and exits via RuvB. An RuvB hexamer assembles on each DNA strand where it exits the tetramer. Each RuvB hexamer is contacted by two RuvA subunits (via domain III) on 2 adjacent RuvB subunits; this complex drives branch migration. In the full resolvosome a probable DNA-RuvA(4)-RuvB(12)-RuvC(2) complex forms which resolves the HJ.

It localises to the cytoplasm. The enzyme catalyses ATP + H2O = ADP + phosphate + H(+). Functionally, the RuvA-RuvB-RuvC complex processes Holliday junction (HJ) DNA during genetic recombination and DNA repair, while the RuvA-RuvB complex plays an important role in the rescue of blocked DNA replication forks via replication fork reversal (RFR). RuvA specifically binds to HJ cruciform DNA, conferring on it an open structure. The RuvB hexamer acts as an ATP-dependent pump, pulling dsDNA into and through the RuvAB complex. RuvB forms 2 homohexamers on either side of HJ DNA bound by 1 or 2 RuvA tetramers; 4 subunits per hexamer contact DNA at a time. Coordinated motions by a converter formed by DNA-disengaged RuvB subunits stimulates ATP hydrolysis and nucleotide exchange. Immobilization of the converter enables RuvB to convert the ATP-contained energy into a lever motion, pulling 2 nucleotides of DNA out of the RuvA tetramer per ATP hydrolyzed, thus driving DNA branch migration. The RuvB motors rotate together with the DNA substrate, which together with the progressing nucleotide cycle form the mechanistic basis for DNA recombination by continuous HJ branch migration. Branch migration allows RuvC to scan DNA until it finds its consensus sequence, where it cleaves and resolves cruciform DNA. The sequence is that of Holliday junction branch migration complex subunit RuvB from Geotalea daltonii (strain DSM 22248 / JCM 15807 / FRC-32) (Geobacter daltonii).